The primary structure comprises 358 residues: MEELSQALASSFSVSQELNSTAAPHPRLCQYKSKYSSLEQSERRRQLLELQKSKRLDYVNHARRLAEDDWTGMESGEEENKKDEEEMDIDPSKKLPKRYANQLMLSEWLIDVPSDLGQEWIVVVCPVGKRALIVASRGSTSAYTKSGYCVNRFSSLLPGGNRRNSTTAKDYTILDCIYSEVNQTYYVLDVMCWRGHPFYDCQTDFRFYWMHSKLPEEEGLGEKTKINPFKFVGLKNFPCTPESLCEVLSMDFPFEVDGLLFYHKQTHYSPGSTPLVGWLRPYMVSDILGVAVPAGPLTTKPEYAGHQLQQIIEHKRSQEDTKEKLTHKASENGHYELEHLSTPKLRNPPHSSESLMDN.

N-acetylmethionine is present on M1. Disordered regions lie at residues 1 to 26 (MEEL…APHP) and 69 to 90 (DWTG…MDID). The necessary for interaction with KPNB1 and m3G-cap U1 and U5 snRNP import receptor activity stretch occupies residues 1–65 (MEELSQALAS…LDYVNHARRL (65 aa)). The tract at residues 1-160 (MEELSQALAS…NRFSSLLPGG (160 aa)) is necessary for interaction with XPO1. Over residues 7 to 22 (ALASSFSVSQELNSTA) the composition is skewed to polar residues. The 63-residue stretch at 11–73 (SFSVSQELNS…RLAEDDWTGM (63 aa)) folds into the IBB domain. At S75 the chain carries Phosphoserine. Residues 128 to 130 (GKR) are interaction with m3G-cap structure. Residues 210-329 (MHSKLPEEEG…DTKEKLTHKA (120 aa)) form a necessary for binding to the m3G-cap structure region. Positions 315-341 (KRSQEDTKEKLTHKASENGHYELEHLS) are enriched in basic and acidic residues. The segment at 315–358 (KRSQEDTKEKLTHKASENGHYELEHLSTPKLRNPPHSSESLMDN) is disordered. The span at 349–358 (PHSSESLMDN) shows a compositional bias: polar residues. S351 carries the phosphoserine modification.

This sequence belongs to the snurportin family. In terms of assembly, component of an import snRNP complex composed of KPNB1, SNUPN, SMN1 and ZNF259. Component of a nuclear export receptor complex composed of KPNB1, Ran, SNUPN and XPO1. Found in a trimeric export complex with SNUPN, Ran and XPO1. Interacts (via IBB domain) with KPNB1; the interaction is direct. Interacts with DDX20, IPO7, SMN1, SNRPB and XPO1. Interacts directly with XPO1. Its interaction with XPO1 and binding to m3G-cap U snRNPs appears to be mutually exclusive. Can form homomers.

It is found in the nucleus. The protein localises to the cytoplasm. In terms of biological role, functions as an U snRNP-specific nuclear import adapter. Involved in the trimethylguanosine (m3G)-cap-dependent nuclear import of U snRNPs. Binds specifically to the terminal m3G-cap U snRNAs. The polypeptide is Snurportin-1 (Snupn) (Mus musculus (Mouse)).